Consider the following 703-residue polypeptide: Polyribonucleotide nucleotidyltransferase (703 aa).

Mg(2+)-binding residues include D485 and D491. The 60-residue stretch at 552-611 (PRAYTINIDTDKIRTLIGTGGKTINKIIEETGVKIDIREDGTVFVLSSDADSANRALKMI) folds into the KH domain. Positions 621–689 (GEVYLGKVTK…NQGRVNLSRK (69 aa)) constitute an S1 motif domain.

Belongs to the polyribonucleotide nucleotidyltransferase family. It depends on Mg(2+) as a cofactor.

The protein resides in the cytoplasm. It carries out the reaction RNA(n+1) + phosphate = RNA(n) + a ribonucleoside 5'-diphosphate. Involved in mRNA degradation. Catalyzes the phosphorolysis of single-stranded polyribonucleotides processively in the 3'- to 5'-direction. This chain is Polyribonucleotide nucleotidyltransferase, found in Clostridium acetobutylicum (strain ATCC 824 / DSM 792 / JCM 1419 / IAM 19013 / LMG 5710 / NBRC 13948 / NRRL B-527 / VKM B-1787 / 2291 / W).